The chain runs to 574 residues: Proline--tRNA ligase (574 aa).

Belongs to the class-II aminoacyl-tRNA synthetase family. ProS type 1 subfamily. In terms of assembly, homodimer.

Its subcellular location is the cytoplasm. It catalyses the reaction tRNA(Pro) + L-proline + ATP = L-prolyl-tRNA(Pro) + AMP + diphosphate. In terms of biological role, catalyzes the attachment of proline to tRNA(Pro) in a two-step reaction: proline is first activated by ATP to form Pro-AMP and then transferred to the acceptor end of tRNA(Pro). As ProRS can inadvertently accommodate and process non-cognate amino acids such as alanine and cysteine, to avoid such errors it has two additional distinct editing activities against alanine. One activity is designated as 'pretransfer' editing and involves the tRNA(Pro)-independent hydrolysis of activated Ala-AMP. The other activity is designated 'posttransfer' editing and involves deacylation of mischarged Ala-tRNA(Pro). The misacylated Cys-tRNA(Pro) is not edited by ProRS. The polypeptide is Proline--tRNA ligase (Oleidesulfovibrio alaskensis (strain ATCC BAA-1058 / DSM 17464 / G20) (Desulfovibrio alaskensis)).